The primary structure comprises 412 residues: FAD-dependent monooxygenase nscC (412 aa).

An N-terminal signal peptide occupies residues 1–21 (MAKPQATVLIIGAGISGLTTS). Positions 35 and 46 each coordinate FAD. The N-linked (GlcNAc...) asparagine glycan is linked to Asn92. Residue Arg119 coordinates FAD. 2 N-linked (GlcNAc...) asparagine glycosylation sites follow: Asn170 and Asn231. Residues Asp326 and Gly339 each coordinate FAD.

The protein belongs to the paxM FAD-dependent monooxygenase family. FAD serves as cofactor.

It functions in the pathway secondary metabolite biosynthesis. Its function is as follows. FAD-dependent monooxygenase; part of the gene cluster that mediates the biosynthesis of neosartoricin B, a prenylated anthracenone that probably exhibits T-cell antiproliferative activity, suggestive of a physiological role as an immunosuppressive agent. The non-reducing polyketide synthase nscA probably synthesizes and cyclizes the decaketide backbone. The hydrolase nscB then mediates the product release through hydrolysis followed by spontaneous decarboxylation. The prenyltransferase nscD catalyzes the addition of the dimethylallyl group to the aromatic C5. The FAD-dependent monooxygenase nscC is then responsible for the stereospecific hydroxylation at C2. Neosartoricin B can be converted into two additional compounds neosartoricins C and D. Neosartoricin C is a spirocyclic compound that is cyclized through the attack of C3 hydroxyl on C14, followed by dehydration. On the other hand, neosartoricin D is a further cyclized compound in which attack of C2 on C14 in neosartoricin C results in the formation of the acetal-containing dioxabicyclo-octanone ring. Both of these compounds are novel and possibly represent related metabolites of the gene cluster. This is FAD-dependent monooxygenase nscC from Arthroderma otae (strain ATCC MYA-4605 / CBS 113480) (Microsporum canis).